The sequence spans 284 residues: Kynurenine formamidase avaC (284 aa).

The HGGXW motif lies at His47–Trp51. Residue Ser130 is the Nucleophile of the active site.

It belongs to the kynurenine formamidase family.

It carries out the reaction N-formyl-L-kynurenine + H2O = L-kynurenine + formate + H(+). Its pathway is secondary metabolite metabolism. Its function is as follows. Kynurenine formamidase; part of the cluster that mediates the biosynthesis of a highly modified cyclo-arginine-tryptophan dipeptide (cRW). Within the pathway, avaC catalyzes the deformylation of the cyclo-Arg-formylkynurenine iketopiperazine (DKP), produced by the FAD-dependent monooxygenase avaB. The first step of the pathway is perfornmed by the arginine-containing cyclodipeptide synthase (RCPDS) avaA that acts as the scaffold-generating enzyme and is responsible for formation of the cyclo-Arg-Trp (cRW) diketopiperazine. AvaB then acts as a multifunctional flavoenzyme that is responsible for generating the cyclo-Arg-formylkynurenine DKP, which can be deformylated by avaC. AvaB then further catalyzes an additional N-oxidation followed by cyclization and dehydration. The next step is an N-acetylation of the guanidine group catalyzed by the arginine N-acetyltransferase avaD. The roles of the additional enzymes identified within the ava cluster still have to be determined. The chain is Kynurenine formamidase avaC from Aspergillus versicolor.